The chain runs to 1056 residues: Kinesin-like protein KIF11 (1056 aa).

Residues 18-359 (NIQVVVRCRP…LEYAHRAKNI (342 aa)) enclose the Kinesin motor domain. 105–112 (GQTGTGKT) serves as a coordination point for ATP. Lys146 is subject to N6-acetyllysine. Coiled coils occupy residues 364–480 (EVNQ…KEEY) and 736–763 (LEEK…DIVN). Position 458 is a phosphothreonine (Thr458). A Glycyl lysine isopeptide (Lys-Gly) (interchain with G-Cter in SUMO2) cross-link involves residue Lys477. A Phosphothreonine modification is found at Thr925. The residue at position 926 (Thr926) is a Phosphothreonine; by CDK1. Phosphoserine; by NEK6 is present on Ser1033. Lys1034 is covalently cross-linked (Glycyl lysine isopeptide (Lys-Gly) (interchain with G-Cter in ubiquitin)).

The protein belongs to the TRAFAC class myosin-kinesin ATPase superfamily. Kinesin family. BimC subfamily. Interacts with the thyroid hormone receptor in the presence of thyroid hormone. Component of a large chromatin remodeling complex, at least composed of MYSM1, PCAF, RBM10 and KIF11/TRIP5. Interacts (via C-terminus) with the kinase NEK6 in both interphase and mitosis. Interacts with RARRES1 and AGBL2. Interacts with TPX2. In terms of processing, phosphorylated exclusively on serine during S phase, but on both serine and Thr-926 during mitosis, so controlling the association of KIF11 with the spindle apparatus (probably during early prophase). A subset of this protein primarily localized at the spindle pole is phosphorylated by NEK6 during mitosis; phosphorylation is required for mitotic function. Post-translationally, ubiquitinated at Lys-1034 by UHRF1 via 'Lys-63'-linked ubiquitin chains, leading to interaction with spindle assembly factor TPX2, thereby ensuring accurate distribution to the spindles during metaphase.

The protein resides in the cytoplasm. The protein localises to the cytoskeleton. It localises to the spindle pole. Functionally, motor protein required for establishing a bipolar spindle and thus contributing to chromosome congression during mitosis. Required in non-mitotic cells for transport of secretory proteins from the Golgi complex to the cell surface. The polypeptide is Kinesin-like protein KIF11 (KIF11) (Homo sapiens (Human)).